We begin with the raw amino-acid sequence, 113 residues long: Nucleoid-associated protein FMG_0513 (113 aa).

The segment at 1-44 (MGNKFRGGMPGMGNMGNMMKQMQKMQRQMEETQKRLEETEVTAT) is disordered. The span at 15 to 26 (MGNMMKQMQKMQ) shows a compositional bias: low complexity. Residues 27-38 (RQMEETQKRLEE) show a composition bias toward basic and acidic residues.

Belongs to the YbaB/EbfC family. As to quaternary structure, homodimer.

It localises to the cytoplasm. It is found in the nucleoid. Functionally, binds to DNA and alters its conformation. May be involved in regulation of gene expression, nucleoid organization and DNA protection. This is Nucleoid-associated protein FMG_0513 from Finegoldia magna (strain ATCC 29328 / DSM 20472 / WAL 2508) (Peptostreptococcus magnus).